Reading from the N-terminus, the 89-residue chain is Large ribosomal subunit protein L37-2 (89 aa).

Zn(2+) is bound by residues Cys19, Cys22, Cys34, and Cys37. Residues 19 to 37 form a C4-type zinc finger; sequence CRRCGNSSYHLQKSKCSQC.

It belongs to the eukaryotic ribosomal protein eL37 family. The cofactor is Zn(2+).

Its function is as follows. Binds to the 23S rRNA. The chain is Large ribosomal subunit protein L37-2 from Drosophila melanogaster (Fruit fly).